Consider the following 588-residue polypeptide: Zeta-carotene desaturase, chloroplastic/chromoplastic (588 aa).

This sequence belongs to the zeta carotene desaturase family. Requires NAD(+) as cofactor. NADP(+) serves as cofactor. The cofactor is FAD.

Its subcellular location is the plastid. It is found in the chloroplast. The protein resides in the chromoplast. The enzyme catalyses 9,9'-di-cis-zeta-carotene + 2 a quinone = 7,7',9,9'-tetra-cis-lycopene + 2 a quinol. The protein operates within carotenoid biosynthesis; lycopene biosynthesis. Catalyzes the conversion of zeta-carotene to lycopene via the intermediary of neurosporene. It carries out two consecutive desaturations (introduction of double bonds) at positions C-7 and C-7'. This chain is Zeta-carotene desaturase, chloroplastic/chromoplastic (ZDS), found in Solanum lycopersicum (Tomato).